The primary structure comprises 83 residues: Aminoacyl carrier protein (83 aa).

The Carrier domain occupies 1–80 (MNATIREILA…DTVKLILDGK (80 aa)). Ser-35 bears the O-(pantetheine 4'-phosphoryl)serine mark.

In terms of processing, 4'-phosphopantetheine is transferred from CoA to a specific serine of the apo-form of this carrier protein.

In terms of biological role, aminoacyl carrier protein. Can be charged with L-alanine, L-glycine or L-serine, via the formation of a thioester bond between the amino acid and the 4'-phosphopantetheinyl prosthetic group, catalyzed by the Atu2573 ligase. In Agrobacterium fabrum (strain C58 / ATCC 33970) (Agrobacterium tumefaciens (strain C58)), this protein is Aminoacyl carrier protein.